A 268-amino-acid polypeptide reads, in one-letter code: Type III pantothenate kinase (268 aa).

18–25 (DIGNTTTT) provides a ligand contact to ATP. Substrate contacts are provided by residues Y108 and 115 to 118 (GADR). D117 serves as the catalytic Proton acceptor. D138 provides a ligand contact to K(+). T141 serves as a coordination point for ATP. T193 is a binding site for substrate.

This sequence belongs to the type III pantothenate kinase family. As to quaternary structure, homodimer. NH4(+) is required as a cofactor. Requires K(+) as cofactor.

It localises to the cytoplasm. It carries out the reaction (R)-pantothenate + ATP = (R)-4'-phosphopantothenate + ADP + H(+). Its pathway is cofactor biosynthesis; coenzyme A biosynthesis; CoA from (R)-pantothenate: step 1/5. Functionally, catalyzes the phosphorylation of pantothenate (Pan), the first step in CoA biosynthesis. This chain is Type III pantothenate kinase, found in Chlorobaculum parvum (strain DSM 263 / NCIMB 8327) (Chlorobium vibrioforme subsp. thiosulfatophilum).